Consider the following 406-residue polypeptide: MSGCPFMGKKHHFNFSELSLEDKNEDSSQEGLNKASKGGLIYGDYLQLDKVLNAQELQSEKKGNKIHDEHLFIVTHQAYELWFKQILWELDSVREIFQNGHVRDERNMLKVVTRIHRISMILKLLVEQFSVLETMTAMDFFDFRDYLSPASGFQSLQFRLLENKIGVPEILRVPYNRRHYRDNFKGETNELLLKSEQELTLLGLVEAWLERTPGLEEEGFHFWGKLEANIFRGLEEELQTVKTKPDSEEKEEQLAELQKQKELFGALFDERRHEHLLSKGERRLSYKALKGALMIYFYREEPRFQVPFQLLTSLMDIDTLMTKWRYNHVCMVHRMIGSKAGTGGSSGYQYLRSTVSDRYKVFVDLFNLSTYLVPRHWVPRLNPSIHKFLYTAECCDSSYFSSDDSD.

Substrate-binding positions include 72–76 (FIVTH) and R144. H328 contacts heme. T342 serves as a coordination point for substrate.

This sequence belongs to the tryptophan 2,3-dioxygenase family. Homotetramer. Dimer of dimers. Heme is required as a cofactor.

It catalyses the reaction L-tryptophan + O2 = N-formyl-L-kynurenine. It functions in the pathway amino-acid degradation; L-tryptophan degradation via kynurenine pathway; L-kynurenine from L-tryptophan: step 1/2. Functionally, heme-dependent dioxygenase that catalyzes the oxidative cleavage of the L-tryptophan (L-Trp) pyrrole ring and converts L-tryptophan to N-formyl-L-kynurenine. Catalyzes the oxidative cleavage of the indole moiety. The chain is Tryptophan 2,3-dioxygenase from Xenopus tropicalis (Western clawed frog).